Reading from the N-terminus, the 95-residue chain is Aspartyl/glutamyl-tRNA(Asn/Gln) amidotransferase subunit C (95 aa).

Belongs to the GatC family. As to quaternary structure, heterotrimer of A, B and C subunits.

It catalyses the reaction L-glutamyl-tRNA(Gln) + L-glutamine + ATP + H2O = L-glutaminyl-tRNA(Gln) + L-glutamate + ADP + phosphate + H(+). The catalysed reaction is L-aspartyl-tRNA(Asn) + L-glutamine + ATP + H2O = L-asparaginyl-tRNA(Asn) + L-glutamate + ADP + phosphate + 2 H(+). Its function is as follows. Allows the formation of correctly charged Asn-tRNA(Asn) or Gln-tRNA(Gln) through the transamidation of misacylated Asp-tRNA(Asn) or Glu-tRNA(Gln) in organisms which lack either or both of asparaginyl-tRNA or glutaminyl-tRNA synthetases. The reaction takes place in the presence of glutamine and ATP through an activated phospho-Asp-tRNA(Asn) or phospho-Glu-tRNA(Gln). The polypeptide is Aspartyl/glutamyl-tRNA(Asn/Gln) amidotransferase subunit C (Pelodictyon phaeoclathratiforme (strain DSM 5477 / BU-1)).